The primary structure comprises 108 residues: MIISTTDKIPGYKIKEITGIVMGNIVHSKHLGKDIAAAFKTLAGGEIKSYTEMMTEARNKAIERMIDEAEKLGADAIVSVRFSSSAIMSGAAEILVYGTAVKLLPKDI.

The protein belongs to the UPF0145 family.

The protein is UPF0145 protein Tmel_1129 of Thermosipho melanesiensis (strain DSM 12029 / CIP 104789 / BI429).